The primary structure comprises 417 residues: Acetate kinase (417 aa).

N9 serves as a coordination point for Mg(2+). ATP is bound at residue K16. R90 contacts substrate. The active-site Proton donor/acceptor is D147. ATP contacts are provided by residues 207 to 211 (HIGNG), 282 to 284 (DLR), and 330 to 334 (GIGEN). E384 is a binding site for Mg(2+).

The protein belongs to the acetokinase family. Homodimer. Mg(2+) serves as cofactor. Requires Mn(2+) as cofactor.

Its subcellular location is the cytoplasm. It carries out the reaction acetate + ATP = acetyl phosphate + ADP. It participates in metabolic intermediate biosynthesis; acetyl-CoA biosynthesis; acetyl-CoA from acetate: step 1/2. Functionally, catalyzes the formation of acetyl phosphate from acetate and ATP. Can also catalyze the reverse reaction. The polypeptide is Acetate kinase (Staphylococcus epidermidis (strain ATCC 35984 / DSM 28319 / BCRC 17069 / CCUG 31568 / BM 3577 / RP62A)).